A 332-amino-acid chain; its full sequence is Adenosine deaminase (332 aa).

Zn(2+) contacts are provided by His-12 and His-14. Positions 14, 16, and 170 each coordinate substrate. His-197 provides a ligand contact to Zn(2+). Glu-200 serves as the catalytic Proton donor. Zn(2+) is bound at residue Asp-278.

It belongs to the metallo-dependent hydrolases superfamily. Adenosine and AMP deaminases family. Adenosine deaminase subfamily. The cofactor is Zn(2+).

The enzyme catalyses adenosine + H2O + H(+) = inosine + NH4(+). It carries out the reaction 2'-deoxyadenosine + H2O + H(+) = 2'-deoxyinosine + NH4(+). Functionally, catalyzes the hydrolytic deamination of adenosine and 2-deoxyadenosine. The protein is Adenosine deaminase of Clostridium perfringens (strain 13 / Type A).